Consider the following 801-residue polypeptide: Phenylalanine--tRNA ligase beta subunit (801 aa).

The 115-residue stretch at 39-153 (AEGLSKLVVG…EEAVPGDAIF (115 aa)) folds into the tRNA-binding domain. In terms of domain architecture, B5 spans 406-481 (TEPVEVSTSL…RIYGYDKLPT (76 aa)). The Mg(2+) site is built by Asp459, Asp465, Glu468, and Glu469. The FDX-ACB domain occupies 708 to 801 (TKFPAMTRDI…LTEQVGAEVR (94 aa)).

Belongs to the phenylalanyl-tRNA synthetase beta subunit family. Type 1 subfamily. As to quaternary structure, tetramer of two alpha and two beta subunits. It depends on Mg(2+) as a cofactor.

It is found in the cytoplasm. The catalysed reaction is tRNA(Phe) + L-phenylalanine + ATP = L-phenylalanyl-tRNA(Phe) + AMP + diphosphate + H(+). The sequence is that of Phenylalanine--tRNA ligase beta subunit from Streptococcus pyogenes serotype M18 (strain MGAS8232).